Reading from the N-terminus, the 76-residue chain is Small ribosomal subunit protein bS18 (76 aa).

This sequence belongs to the bacterial ribosomal protein bS18 family. As to quaternary structure, part of the 30S ribosomal subunit. Forms a tight heterodimer with protein bS6.

Its function is as follows. Binds as a heterodimer with protein bS6 to the central domain of the 16S rRNA, where it helps stabilize the platform of the 30S subunit. The protein is Small ribosomal subunit protein bS18 of Xanthomonas euvesicatoria pv. vesicatoria (strain 85-10) (Xanthomonas campestris pv. vesicatoria).